The primary structure comprises 122 residues: Large ribosomal subunit protein uL18 (122 aa).

Belongs to the universal ribosomal protein uL18 family. Part of the 50S ribosomal subunit; part of the 5S rRNA/L5/L18/L25 subcomplex. Contacts the 5S and 23S rRNAs.

Its function is as follows. This is one of the proteins that bind and probably mediate the attachment of the 5S RNA into the large ribosomal subunit, where it forms part of the central protuberance. This Desulforamulus reducens (strain ATCC BAA-1160 / DSM 100696 / MI-1) (Desulfotomaculum reducens) protein is Large ribosomal subunit protein uL18.